We begin with the raw amino-acid sequence, 175 residues long: Putative transmembrane protein ORF175 (175 aa).

4 helical membrane passes run leucine 14–methionine 34, valine 58–phenylalanine 78, isoleucine 101–phenylalanine 121, and isoleucine 142–isoleucine 162.

The protein resides in the host membrane. This chain is Putative transmembrane protein ORF175, found in Acidianus two-tailed virus (ATV).